We begin with the raw amino-acid sequence, 114 residues long: uncharacterized protein (114 aa).

Residue cysteine 10 is part of the active site.

This sequence belongs to the ArsC family.

This is an uncharacterized protein from Haemophilus influenzae (strain ATCC 51907 / DSM 11121 / KW20 / Rd).